A 911-amino-acid chain; its full sequence is Alpha-actinin-4 (911 aa).

The actin-binding stretch occupies residues 1-269 (MVDYHAANQA…YVSSFYHAFS (269 aa)). The interval 12 to 26 (QYGPSSGGNGTGGGG) is interaction with VCL. A disordered region spans residues 12–31 (QYGPSSGGNGTGGGGGMGDY). Over residues 16–29 (SSGGNGTGGGGGMG) the composition is skewed to gly residues. Tyrosine 31 carries the post-translational modification Phosphotyrosine. Positions 40-61 (RDLLLDPAWEKQQRKTFTAWCN) are interaction with VCL. Calponin-homology (CH) domains are found at residues 50-154 (KQQR…LRFA) and 163-269 (TSAK…HAFS). The LXXLL motif signature appears at 84–88 (LMLLL). Residues 108–126 (KINNVNKALDFIASKGVKL) form an interaction with VCL region. At lysine 114 the chain carries N6-acetyllysine. The segment at 177-192 (TAPYKNVNVQNFHISW) is polyphosphoinositide (PIP2)-binding. Lysine 214 carries the post-translational modification N6-acetyllysine. At threonine 249 the chain carries Phosphothreonine. 4 Spectrin repeats span residues 293-403 (HLME…WLLN), 413-518 (HLAE…ALEK), 528-639 (QLHL…ALLE), and 649-752 (HLRR…EVEN). N6-acetyllysine occurs at positions 592 and 625. Serine 696 bears the Phosphoserine mark. The mediates interaction with MICALL2 stretch occupies residues 736–911 (WEQLLTTIAR…STALYGESDL (176 aa)). EF-hand domains lie at 765-800 (EQMQ…LGYD) and 806-841 (QGDA…ETTD). Ca(2+) is bound at residue aspartate 778. N6-acetyllysine is present on lysine 779. The Ca(2+) site is built by aspartate 780 and glutamate 789. The residue at position 859 (lysine 859) is an N6-acetyllysine. Serine 909 is modified (phosphoserine).

Belongs to the alpha-actinin family. In terms of assembly, homodimer; antiparallel. Interacts with MAGI1. Interacts with MICALL2 (preferentially in opened conformation); stimulated by RAB13 activation. Identified in a IGF2BP1-dependent mRNP granule complex containing untranslated mRNAs. Component of the CART complex, at least composed of ACTN4, HGS/HRS, MYO5B and TRIM3. Binds TRIM3 at the N-terminus. Interacts with PDLIM2. Identified in a complex with CASK, IQGAP1, MAGI2, NPHS1, SPTAN1 and SPTBN1. Interacts with PPARG and RARA. Binds to VCL; this interaction triggers VCL conformational changes. Interacts with SEPTIN14. Interacts with IGSF8. In terms of tissue distribution, expressed in the foot process layer of podocytes in the kidney glomerulus but not in tubules (at protein level).

It is found in the nucleus. It localises to the cytoplasm. Its subcellular location is the cell junction. The protein resides in the cytoskeleton. The protein localises to the stress fiber. It is found in the perinuclear region. F-actin cross-linking protein which is thought to anchor actin to a variety of intracellular structures. This is a bundling protein. Probably involved in vesicular trafficking via its association with the CART complex. The CART complex is necessary for efficient transferrin receptor recycling but not for EGFR degradation. Involved in tight junction assembly in epithelial cells probably through interaction with MICALL2. Links MICALL2 to the actin cytoskeleton and recruits it to the tight junctions. May also function as a transcriptional coactivator, stimulating transcription mediated by the nuclear hormone receptors PPARG and RARA. Association with IGSF8 regulates the immune synapse formation and is required for efficient T-cell activation. This chain is Alpha-actinin-4, found in Rattus norvegicus (Rat).